Reading from the N-terminus, the 108-residue chain is Putative septation protein SpoVG (108 aa).

It belongs to the SpoVG family.

Its function is as follows. Could be involved in septation. The chain is Putative septation protein SpoVG from Bdellovibrio bacteriovorus (strain ATCC 15356 / DSM 50701 / NCIMB 9529 / HD100).